The sequence spans 31 residues: Photosystem II reaction center protein T (31 aa).

Residues 3–23 (ALVYTFLLIGTLGIIFFAIFF) form a helical membrane-spanning segment.

This sequence belongs to the PsbT family. As to quaternary structure, PSII is composed of 1 copy each of membrane proteins PsbA, PsbB, PsbC, PsbD, PsbE, PsbF, PsbH, PsbI, PsbJ, PsbK, PsbL, PsbM, PsbT, PsbY, PsbZ, Psb30/Ycf12, at least 3 peripheral proteins of the oxygen-evolving complex and a large number of cofactors. It forms dimeric complexes.

The protein resides in the plastid. It is found in the chloroplast thylakoid membrane. In terms of biological role, found at the monomer-monomer interface of the photosystem II (PS II) dimer, plays a role in assembly and dimerization of PSII. PSII is a light-driven water plastoquinone oxidoreductase, using light energy to abstract electrons from H(2)O, generating a proton gradient subsequently used for ATP formation. This is Photosystem II reaction center protein T from Stigeoclonium helveticum (Green alga).